The sequence spans 355 residues: Methylthioribose-1-phosphate isomerase (355 aa).

Substrate is bound by residues 50–52 (RGA), arginine 93, and glutamine 198. Aspartate 239 serves as the catalytic Proton donor. 249-250 (NK) is a binding site for substrate.

It belongs to the eIF-2B alpha/beta/delta subunits family. MtnA subfamily. Homodimer.

The catalysed reaction is 5-(methylsulfanyl)-alpha-D-ribose 1-phosphate = 5-(methylsulfanyl)-D-ribulose 1-phosphate. It functions in the pathway amino-acid biosynthesis; L-methionine biosynthesis via salvage pathway; L-methionine from S-methyl-5-thio-alpha-D-ribose 1-phosphate: step 1/6. Its function is as follows. Catalyzes the interconversion of methylthioribose-1-phosphate (MTR-1-P) into methylthioribulose-1-phosphate (MTRu-1-P). This chain is Methylthioribose-1-phosphate isomerase, found in Geobacillus kaustophilus (strain HTA426).